A 985-amino-acid chain; its full sequence is Regulator of telomere elongation helicase 1 homolog (985 aa).

In terms of domain architecture, Helicase ATP-binding spans 7–303 (AGIPVHFPFE…QDMAGDEPKD (297 aa)). Residue 42–49 (SPTGTGKT) participates in ATP binding. 4 residues coordinate [4Fe-4S] cluster: cysteine 146, cysteine 164, cysteine 173, and cysteine 209. A DEAH box motif is present at residues 252-255 (DEAH). Phosphothreonine is present on threonine 874.

Belongs to the helicase family. RAD3/XPD subfamily.

The protein localises to the nucleus. The enzyme catalyses ATP + H2O = ADP + phosphate + H(+). A probable ATP-dependent DNA helicase implicated in DNA repair and the maintenance of genomic stability. Acts as an anti-recombinase to counteract toxic recombination and limit crossover during meiosis. Regulates meiotic recombination and crossover homeostasis by physically dissociating strand invasion events and thereby promotes noncrossover repair by meiotic synthesis dependent strand annealing (SDSA) as well as disassembly of D loop recombination intermediates. This chain is Regulator of telomere elongation helicase 1 homolog, found in Drosophila erecta (Fruit fly).